A 547-amino-acid chain; its full sequence is CTP synthase (547 aa).

The segment at 1-265 (MARFIFITGG…DQAVLDAFQI (265 aa)) is amidoligase domain. Residue Ser-13 coordinates CTP. Ser-13 is a binding site for UTP. ATP-binding positions include 14-19 (SLGKGL) and Asp-71. 2 residues coordinate Mg(2+): Asp-71 and Glu-139. Residues 146 to 148 (DIE), 186 to 191 (KTKPTQ), and Lys-222 contribute to the CTP site. UTP contacts are provided by residues 186-191 (KTKPTQ) and Lys-222. Positions 291–546 (KIAIVGKYVQ…VRAAKESSRL (256 aa)) constitute a Glutamine amidotransferase type-1 domain. Gly-353 contributes to the L-glutamine binding site. Cys-380 acts as the Nucleophile; for glutamine hydrolysis in catalysis. Residues 381-384 (LGMQ), Glu-404, and Arg-474 each bind L-glutamine. Catalysis depends on residues His-519 and Glu-521.

Belongs to the CTP synthase family. In terms of assembly, homotetramer.

The enzyme catalyses UTP + L-glutamine + ATP + H2O = CTP + L-glutamate + ADP + phosphate + 2 H(+). It carries out the reaction L-glutamine + H2O = L-glutamate + NH4(+). It catalyses the reaction UTP + NH4(+) + ATP = CTP + ADP + phosphate + 2 H(+). It functions in the pathway pyrimidine metabolism; CTP biosynthesis via de novo pathway; CTP from UDP: step 2/2. Allosterically activated by GTP, when glutamine is the substrate; GTP has no effect on the reaction when ammonia is the substrate. The allosteric effector GTP functions by stabilizing the protein conformation that binds the tetrahedral intermediate(s) formed during glutamine hydrolysis. Inhibited by the product CTP, via allosteric rather than competitive inhibition. Functionally, catalyzes the ATP-dependent amination of UTP to CTP with either L-glutamine or ammonia as the source of nitrogen. Regulates intracellular CTP levels through interactions with the four ribonucleotide triphosphates. In Ruegeria pomeroyi (strain ATCC 700808 / DSM 15171 / DSS-3) (Silicibacter pomeroyi), this protein is CTP synthase.